The following is a 495-amino-acid chain: MPRKKVTDVSGNGGLKRKRGGGKKKEREFSSDDEFDDYEQENTKKPGKPAAKAGLQPVTVADDVKEKIKLEVPKVKGQLLIFGATNWDLIGRKEVPKQQAAFRNLGQNLWGPHRYGCLSDVQVSCVVSGPCAAHSLIITTEGKLWSWGRNDKGQLGHGDTKRLEAPKLIEGLGEEVIVAAACGRNHTLALTENGTVYTFGENKLGQLGQGNQTDAVLSPATIQYNGQPIVKVACGAEFSMIVDCKGNLYSFGCPEYGQLGHNSDGKFIARAQRIEFDCELIPRRVAIFIEKTKDGQVLPVPNVVARDVACGANHTLVLDSQKRVFSWGFGGYGRLGHAEQKDEMVPRLVKLFDFPGRGATQIYCGYQCSFALSEMGGLFFWGVTNTSRESTMYPKAVQDLCGWKIRSLACGKSSIIVAADDSTISWGPSPTFGELGYGDNKPKSSTTAQEVKTLDGVYSEQVVMGYSHSLVIARQDTEQEKEKLKKLPEYNPRTL.

The segment at 1–56 is disordered; sequence MPRKKVTDVSGNGGLKRKRGGGKKKEREFSSDDEFDDYEQENTKKPGKPAAKAGLQ. Acidic residues predominate over residues 31-40; that stretch reads SDDEFDDYEQ. RCC1 repeat units follow at residues 76–138, 141–192, 194–244, 246–320, 321–374, 376–420, and 421–474; these read KGQL…SLII, EGKL…ALTE, GTVY…IVDC, GNLY…VLDS, QKRV…ALSE, GGLF…VAAD, and DSTI…VIAR. The tract at residues 291-298 is required for interaction with RAC1; it reads KTKDGQVL.

In terms of assembly, interacts with RAC1. Interacts with CORO1C.

It localises to the nucleus. The protein resides in the nucleolus. Its subcellular location is the cytoplasm. The protein localises to the cytoskeleton. It is found in the chromosome. It localises to the centromere. The protein resides in the spindle. Its subcellular location is the midbody. The protein localises to the cell membrane. In terms of biological role, multifunctional protein that may affect its functions by regulating the activity of small GTPases, such as RAC1 and RALA. Required for normal progress through the cell cycle, both during interphase and during mitosis. Required for normal attachment of kinetochores to mitotic spindles. Required for normal organization of the microtubule cytoskeleton in interphase cells. Interferes with the activation of RAC1 by guanine nucleotide exchange factors. Prevents accumulation of active, GTP-bound RAC1, and suppresses RAC1-mediated reorganization of the actin cytoskeleton and formation of membrane protrusions. Required for normal cellular responses to contacts with the extracellular matrix of adjacent cells, and for directional cell migration. The chain is Protein RCC2 homolog (rcc2) from Danio rerio (Zebrafish).